Reading from the N-terminus, the 388-residue chain is Basigin (388 aa).

A signal peptide spans 1 to 22; sequence MAAALLLALAFTFLSGQGACAA. Residues 23 to 326 are Extracellular-facing; it reads AGFLKAPMSQ…ISLRVRSRLA (304 aa). The Ig-like domain maps to 37 to 120; it reads GGSVVLHCEA…SSDPDRNHLT (84 aa). 3 disulfides stabilise this stretch: Cys44–Cys108, Cys157–Cys203, and Cys242–Cys304. The Ig-like C2-type domain maps to 138-219; it reads EPGTIVTSVQ…VGRGNINVEG (82 aa). 3 N-linked (GlcNAc...) asparagine glycosylation sites follow: Asn160, Asn269, and Asn305. One can recognise an Ig-like V-type domain in the interval 221 to 320; that stretch reads PRIKVGKKSE…GSARETISLR (100 aa). A helical membrane pass occupies residues 327–347; it reads ALWPFLGIVAEVLVLVTIIFI. The Cytoplasmic portion of the chain corresponds to 348-388; that stretch reads YEKRRKPDQTLDEDDPGAAPLKGSGSHLNDKDKNVRQRNAT. The interval 355–388 is disordered; the sequence is DQTLDEDDPGAAPLKGSGSHLNDKDKNVRQRNAT. Thr357 is subject to Phosphothreonine. Ser371 is modified (phosphoserine).

As to quaternary structure, homooligomer. Interacts with NXNL1, SLC2A1 and SLC16A1/GLUT1. Interacts with XKR8; promoting its localization at the cell membrane. Homooligomer. Interacts with SLC16A1; interaction mediates SLC16A1 targeting to the plasma membrane. Interacts with SLC16A3; interaction mediates SLC16A3 targeting to the plasma membrane. Interacts with VEGFA, KDR/VEGFR2, PPIA/CYPA, SLC16A12, SLC16A11, ATP1B2, MAG, L1CAM and AJAP1. Interacts with PPIL2; regulates BSG transport to the cell membrane. In terms of assembly, interacts with SLC16A6; this interaction mediates targeting to the plasma membrane. In terms of tissue distribution, expressed in the skeletal muscle, liver, small intestine, kidney, testis, brain, heart and spleen. Also present in various immature cells and endothelia.

The protein localises to the cell membrane. The protein resides in the photoreceptor inner segment. It localises to the cell projection. Its subcellular location is the cilium. It is found in the photoreceptor outer segment. The protein localises to the endoplasmic reticulum membrane. The protein resides in the basolateral cell membrane. Essential for normal retinal maturation and development. Acts as a retinal cell surface receptor for NXNL1 and plays an important role in NXNL1-mediated survival of retinal cone photoreceptors. In association with glucose transporter SLC16A1/GLUT1 and NXNL1, promotes retinal cone survival by enhancing aerobic glycolysis and accelerating the entry of glucose into photoreceptors. Its function is as follows. Signaling receptor for cyclophilins, essential for PPIA/CYPA and PPIB/CYPB-dependent signaling related to chemotaxis and adhesion of immune cells. Plays an important role in targeting the monocarboxylate transporters SLC16A1/GLUT1 and SLC16A3 to the plasma membrane. Acts as a coreceptor for vascular endothelial growth factor receptor 2 (KDR/VEGFR2) in endothelial cells enhancing its VEGFA-mediated activation and downstream signaling. Promotes angiogenesis through EPAS1/HIF2A-mediated up-regulation of VEGFA and KDR/VEGFR2 in endothelial cells. Plays an important role in spermatogenesis; mediates interactions between germ cells and Sertoli cell and is essential for the development/differentiation of germ cells to round spermatids. This is Basigin (Bsg) from Rattus norvegicus (Rat).